The following is a 265-amino-acid chain: Proteasome subunit alpha (265 aa).

A disordered region spans residues 236-265; that stretch reads EKDSKGSKGAQNPKGARDSKNSKSYGESTD.

Belongs to the peptidase T1A family. The 20S proteasome core is composed of 14 alpha and 14 beta subunits that assemble into four stacked heptameric rings, resulting in a barrel-shaped structure. The two inner rings, each composed of seven catalytic beta subunits, are sandwiched by two outer rings, each composed of seven alpha subunits. The catalytic chamber with the active sites is on the inside of the barrel. Has a gated structure, the ends of the cylinder being occluded by the N-termini of the alpha-subunits. Is capped by the proteasome-associated ATPase, ARC.

The protein localises to the cytoplasm. The protein operates within protein degradation; proteasomal Pup-dependent pathway. The formation of the proteasomal ATPase ARC-20S proteasome complex, likely via the docking of the C-termini of ARC into the intersubunit pockets in the alpha-rings, may trigger opening of the gate for substrate entry. Interconversion between the open-gate and close-gate conformations leads to a dynamic regulation of the 20S proteasome proteolysis activity. Functionally, component of the proteasome core, a large protease complex with broad specificity involved in protein degradation. The sequence is that of Proteasome subunit alpha from Mycobacterium leprae (strain Br4923).